We begin with the raw amino-acid sequence, 194 residues long: Holliday junction branch migration complex subunit RuvA (194 aa).

Residues 1–64 are domain I; it reads MIGRLRGILA…EDSVSLYGFL (64 aa). A domain II region spans residues 65–140; that stretch reads REGERRLFRD…RAADFSSGAP (76 aa). Residues 140–144 form a flexible linker region; the sequence is PITGQ. A domain III region spans residues 145 to 194; it reads LGPDAVSEATVALQQLGYKPAEAARMARDAGAEGDEVATVIRKALQAALR.

This sequence belongs to the RuvA family. Homotetramer. Forms an RuvA(8)-RuvB(12)-Holliday junction (HJ) complex. HJ DNA is sandwiched between 2 RuvA tetramers; dsDNA enters through RuvA and exits via RuvB. An RuvB hexamer assembles on each DNA strand where it exits the tetramer. Each RuvB hexamer is contacted by two RuvA subunits (via domain III) on 2 adjacent RuvB subunits; this complex drives branch migration. In the full resolvosome a probable DNA-RuvA(4)-RuvB(12)-RuvC(2) complex forms which resolves the HJ.

The protein resides in the cytoplasm. In terms of biological role, the RuvA-RuvB-RuvC complex processes Holliday junction (HJ) DNA during genetic recombination and DNA repair, while the RuvA-RuvB complex plays an important role in the rescue of blocked DNA replication forks via replication fork reversal (RFR). RuvA specifically binds to HJ cruciform DNA, conferring on it an open structure. The RuvB hexamer acts as an ATP-dependent pump, pulling dsDNA into and through the RuvAB complex. HJ branch migration allows RuvC to scan DNA until it finds its consensus sequence, where it cleaves and resolves the cruciform DNA. This is Holliday junction branch migration complex subunit RuvA from Xanthomonas axonopodis pv. citri (strain 306).